The chain runs to 947 residues: Bifunctional glutamine synthetase adenylyltransferase/adenylyl-removing enzyme (947 aa).

The interval 1–440 (MTPLSSPLSQ…VFNELIGDDE (440 aa)) is adenylyl removase. Residues 450-947 (SEPWREVWQD…ASWRKWLVAV (498 aa)) form an adenylyl transferase region.

This sequence belongs to the GlnE family. Mg(2+) is required as a cofactor.

The catalysed reaction is [glutamine synthetase]-O(4)-(5'-adenylyl)-L-tyrosine + phosphate = [glutamine synthetase]-L-tyrosine + ADP. It catalyses the reaction [glutamine synthetase]-L-tyrosine + ATP = [glutamine synthetase]-O(4)-(5'-adenylyl)-L-tyrosine + diphosphate. Involved in the regulation of glutamine synthetase GlnA, a key enzyme in the process to assimilate ammonia. When cellular nitrogen levels are high, the C-terminal adenylyl transferase (AT) inactivates GlnA by covalent transfer of an adenylyl group from ATP to specific tyrosine residue of GlnA, thus reducing its activity. Conversely, when nitrogen levels are low, the N-terminal adenylyl removase (AR) activates GlnA by removing the adenylyl group by phosphorolysis, increasing its activity. The regulatory region of GlnE binds the signal transduction protein PII (GlnB) which indicates the nitrogen status of the cell. In Salmonella paratyphi C (strain RKS4594), this protein is Bifunctional glutamine synthetase adenylyltransferase/adenylyl-removing enzyme.